Reading from the N-terminus, the 122-residue chain is MIHPETNLDVADNSGARRVQCIKVLGGSKRKTASVGDVIVVSVKEAIPRGKVKKGDVHQAVIVRTSYPVRRADGSAIRFDKNAAVLLNKQQEPIGTRIFGPVVRELRARKFMKIISLAPEVL.

Belongs to the universal ribosomal protein uL14 family. As to quaternary structure, part of the 50S ribosomal subunit. Forms a cluster with proteins L3 and L19. In the 70S ribosome, L14 and L19 interact and together make contacts with the 16S rRNA in bridges B5 and B8.

Binds to 23S rRNA. Forms part of two intersubunit bridges in the 70S ribosome. In Gluconobacter oxydans (strain 621H) (Gluconobacter suboxydans), this protein is Large ribosomal subunit protein uL14.